The chain runs to 234 residues: Core atranone cluster (CAC) protein 1 (234 aa).

The protein operates within mycotoxin biosynthesis. Part of the core atranone cluster (CAC) which products are predicted to catalyze most or all steps of mycotoxin atranone synthesis, starting from geranylgeranyl pyrophosphate (GGPP). The initial cyclization of GGPP to dolabellane is probably performed by the terpene cyclase ATR13. The Baeyer-Villiger oxidation near the end of the atranone synthesis, which converts atranones D and E to atranones F and G is predicted to be catalyzed by the monooxygenase ATR8. Of the CAC's other predicted gene products, the reducing PKS ATR6 might synthesize a polyketide chain. This polyketide is probably transferred onto the atranone backbone by the polyketide transferase ATR5. Other predicted CAC products include 4 oxygenases (ATR2, ATR3, ATR4, and ATR14), 3 short-chain reductases (ATR7, ATR9, and ATR10), and a methyltransferase (ATR12). These may all be involved in the various steps of atranone biosynthesis, although their specific roles must await experimental determination. The polypeptide is Core atranone cluster (CAC) protein 1 (Stachybotrys chlorohalonatus (strain IBT 40285)).